The chain runs to 922 residues: Lysine-specific demethylase 4 (922 aa).

Polar residues predominate over residues 1–15 (MASAATTTHFPSSRI). Disordered stretches follow at residues 1 to 21 (MASA…EPCA) and 42 to 61 (SSSC…MFTD). The JmjN domain maps to 87-130 (VLTFYPTMREFKNFSQYIKKIEQNGGHLKAGIAKIVAPEGWTPR). Position 213 (Y213) interacts with 2-oxoglutarate. The 166-residue stretch at 223–388 (DAQVEEWNMN…YGKDAVLCDC (166 aa)) folds into the JmjC domain. Residues H265 and E267 each coordinate Fe cation. 2 residues coordinate 2-oxoglutarate: N275 and K283. Zn(2+) is bound by residues C314 and H320. K321 lines the 2-oxoglutarate pocket. Residue H356 coordinates Fe cation. Residues C386 and C388 each coordinate Zn(2+). The disordered stretch occupies residues 435-475 (KRRQSLADASKIAKRARLGASSTATDSDGSSGSSGSEEATE). The segment covering 453-475 (GASSTATDSDGSSGSSGSEEATE) has biased composition (low complexity). Residues 639-675 (TTSCQLCELRGGALIPCQIGTDSTWAHVACALFNRRA) form a C2HC pre-PHD-type zinc finger. Residues 723–783 (WECVVCHRTD…GVVMICHKHE (61 aa)) form a PHD-type; degenerate zinc finger.

It belongs to the JHDM3 histone demethylase family. It depends on Fe(2+) as a cofactor.

It is found in the nucleus. The catalysed reaction is N(6),N(6),N(6)-trimethyl-L-lysyl(9)-[histone H3] + 2 2-oxoglutarate + 2 O2 = N(6)-methyl-L-lysyl(9)-[histone H3] + 2 formaldehyde + 2 succinate + 2 CO2. The enzyme catalyses N(6),N(6),N(6)-trimethyl-L-lysyl(36)-[histone H3] + 2 2-oxoglutarate + 2 O2 = N(6)-methyl-L-lysyl(36)-[histone H3] + 2 formaldehyde + 2 succinate + 2 CO2. Histone demethylase that specifically demethylates 'Lys-9' and 'Lys-36' residues of histone H3, thereby playing a central role in histone code. Demethylation of Lys residue generates formaldehyde and succinate. Involved in the negative regulation of lifespan in a germline-dependent fashion. This is Lysine-specific demethylase 4 (jmjd-2) from Caenorhabditis elegans.